The sequence spans 275 residues: Large ribosomal subunit protein uL2 (275 aa).

The tract at residues 222 to 257 (GTAMNAVDHPHGGGRGRSKGNNQPRSPWNQPAKGFK) is disordered. The segment covering 240-250 (KGNNQPRSPWN) has biased composition (polar residues).

It belongs to the universal ribosomal protein uL2 family. Part of the 50S ribosomal subunit. Forms a bridge to the 30S subunit in the 70S ribosome.

Its function is as follows. One of the primary rRNA binding proteins. Required for association of the 30S and 50S subunits to form the 70S ribosome, for tRNA binding and peptide bond formation. It has been suggested to have peptidyltransferase activity; this is somewhat controversial. Makes several contacts with the 16S rRNA in the 70S ribosome. This is Large ribosomal subunit protein uL2 from Endomicrobium trichonymphae.